A 474-amino-acid polypeptide reads, in one-letter code: 3-isopropylmalate dehydratase large subunit (474 aa).

[4Fe-4S] cluster-binding residues include cysteine 353, cysteine 414, and cysteine 417.

This sequence belongs to the aconitase/IPM isomerase family. LeuC type 1 subfamily. Heterodimer of LeuC and LeuD. [4Fe-4S] cluster serves as cofactor.

The catalysed reaction is (2R,3S)-3-isopropylmalate = (2S)-2-isopropylmalate. It participates in amino-acid biosynthesis; L-leucine biosynthesis; L-leucine from 3-methyl-2-oxobutanoate: step 2/4. In terms of biological role, catalyzes the isomerization between 2-isopropylmalate and 3-isopropylmalate, via the formation of 2-isopropylmaleate. The chain is 3-isopropylmalate dehydratase large subunit from Xylella fastidiosa (strain M23).